The following is a 457-amino-acid chain: Siroheme synthase (457 aa).

A precorrin-2 dehydrogenase /sirohydrochlorin ferrochelatase region spans residues 1 to 204 (MDHLPIFCQL…ADEKAVNATT (204 aa)). NAD(+) contacts are provided by residues 22–23 (DV) and 43–44 (LN). Residue Ser-128 is modified to Phosphoserine. The tract at residues 216–457 (GEVVLVGAGP…RDKLNWFSNH (242 aa)) is uroporphyrinogen-III C-methyltransferase. S-adenosyl-L-methionine is bound at residue Pro-225. The active-site Proton acceptor is the Asp-248. The active-site Proton donor is Lys-270. S-adenosyl-L-methionine contacts are provided by residues 301–303 (GGD), Ile-306, 331–332 (TA), Met-382, and Gly-411.

This sequence in the N-terminal section; belongs to the precorrin-2 dehydrogenase / sirohydrochlorin ferrochelatase family. It in the C-terminal section; belongs to the precorrin methyltransferase family.

The enzyme catalyses uroporphyrinogen III + 2 S-adenosyl-L-methionine = precorrin-2 + 2 S-adenosyl-L-homocysteine + H(+). It catalyses the reaction precorrin-2 + NAD(+) = sirohydrochlorin + NADH + 2 H(+). It carries out the reaction siroheme + 2 H(+) = sirohydrochlorin + Fe(2+). It participates in cofactor biosynthesis; adenosylcobalamin biosynthesis; precorrin-2 from uroporphyrinogen III: step 1/1. Its pathway is cofactor biosynthesis; adenosylcobalamin biosynthesis; sirohydrochlorin from precorrin-2: step 1/1. It functions in the pathway porphyrin-containing compound metabolism; siroheme biosynthesis; precorrin-2 from uroporphyrinogen III: step 1/1. The protein operates within porphyrin-containing compound metabolism; siroheme biosynthesis; siroheme from sirohydrochlorin: step 1/1. It participates in porphyrin-containing compound metabolism; siroheme biosynthesis; sirohydrochlorin from precorrin-2: step 1/1. In terms of biological role, multifunctional enzyme that catalyzes the SAM-dependent methylations of uroporphyrinogen III at position C-2 and C-7 to form precorrin-2 via precorrin-1. Then it catalyzes the NAD-dependent ring dehydrogenation of precorrin-2 to yield sirohydrochlorin. Finally, it catalyzes the ferrochelation of sirohydrochlorin to yield siroheme. This chain is Siroheme synthase, found in Salmonella paratyphi A (strain ATCC 9150 / SARB42).